Consider the following 282-residue polypeptide: Ribosomal RNA small subunit methyltransferase A (282 aa).

Residues histidine 11, leucine 13, glycine 44, glutamate 65, aspartate 90, and asparagine 106 each coordinate S-adenosyl-L-methionine.

It belongs to the class I-like SAM-binding methyltransferase superfamily. rRNA adenine N(6)-methyltransferase family. RsmA subfamily.

It is found in the cytoplasm. The enzyme catalyses adenosine(1518)/adenosine(1519) in 16S rRNA + 4 S-adenosyl-L-methionine = N(6)-dimethyladenosine(1518)/N(6)-dimethyladenosine(1519) in 16S rRNA + 4 S-adenosyl-L-homocysteine + 4 H(+). Its function is as follows. Specifically dimethylates two adjacent adenosines (A1518 and A1519) in the loop of a conserved hairpin near the 3'-end of 16S rRNA in the 30S particle. May play a critical role in biogenesis of 30S subunits. This is Ribosomal RNA small subunit methyltransferase A from Synechococcus sp. (strain JA-2-3B'a(2-13)) (Cyanobacteria bacterium Yellowstone B-Prime).